Consider the following 92-residue polypeptide: Large ribosomal subunit protein eL43 (92 aa).

Residues 39–60 form a C4-type zinc finger; that stretch reads CEFCGKFAVKRKAVGIWGCKDC.

Belongs to the eukaryotic ribosomal protein eL43 family.

In Pseudotsuga menziesii (Douglas-fir), this protein is Large ribosomal subunit protein eL43 (RPL37A).